Reading from the N-terminus, the 73-residue chain is Large ribosomal subunit protein bL31 (73 aa).

Belongs to the bacterial ribosomal protein bL31 family. Type A subfamily. Part of the 50S ribosomal subunit.

Binds the 23S rRNA. This is Large ribosomal subunit protein bL31 from Chelativorans sp. (strain BNC1).